The following is a 294-amino-acid chain: Undecaprenyl-diphosphatase (294 aa).

Transmembrane regions (helical) follow at residues proline 39 to phenylalanine 59, alanine 93 to leucine 113, asparagine 123 to alanine 143, serine 198 to valine 218, proline 232 to leucine 252, and isoleucine 268 to proline 288.

This sequence belongs to the UppP family.

The protein resides in the cell membrane. The catalysed reaction is di-trans,octa-cis-undecaprenyl diphosphate + H2O = di-trans,octa-cis-undecaprenyl phosphate + phosphate + H(+). Catalyzes the dephosphorylation of undecaprenyl diphosphate (UPP). Confers resistance to bacitracin. The protein is Undecaprenyl-diphosphatase of Bifidobacterium longum (strain DJO10A).